Here is a 427-residue protein sequence, read N- to C-terminus: Serine--tRNA ligase (427 aa).

229–231 (TAE) is a binding site for L-serine. 260-262 (RSE) is a binding site for ATP. Position 283 (Glu-283) interacts with L-serine. An ATP-binding site is contributed by 347–350 (EISS). Ser-383 serves as a coordination point for L-serine.

Belongs to the class-II aminoacyl-tRNA synthetase family. Type-1 seryl-tRNA synthetase subfamily. In terms of assembly, homodimer. The tRNA molecule binds across the dimer.

It localises to the cytoplasm. The enzyme catalyses tRNA(Ser) + L-serine + ATP = L-seryl-tRNA(Ser) + AMP + diphosphate + H(+). It catalyses the reaction tRNA(Sec) + L-serine + ATP = L-seryl-tRNA(Sec) + AMP + diphosphate + H(+). Its pathway is aminoacyl-tRNA biosynthesis; selenocysteinyl-tRNA(Sec) biosynthesis; L-seryl-tRNA(Sec) from L-serine and tRNA(Sec): step 1/1. Catalyzes the attachment of serine to tRNA(Ser). Is also able to aminoacylate tRNA(Sec) with serine, to form the misacylated tRNA L-seryl-tRNA(Sec), which will be further converted into selenocysteinyl-tRNA(Sec). The polypeptide is Serine--tRNA ligase (Oleidesulfovibrio alaskensis (strain ATCC BAA-1058 / DSM 17464 / G20) (Desulfovibrio alaskensis)).